We begin with the raw amino-acid sequence, 483 residues long: Protein nucleotidyltransferase YdiU (483 aa).

Gly-87, Gly-89, Arg-90, Lys-110, Asp-122, Gly-123, Arg-173, and Arg-180 together coordinate ATP. Asp-249 (proton acceptor) is an active-site residue. Mg(2+) contacts are provided by Asn-250 and Asp-259. Residue Asp-259 coordinates ATP.

The protein belongs to the SELO family. Mg(2+) serves as cofactor. It depends on Mn(2+) as a cofactor.

It carries out the reaction L-seryl-[protein] + ATP = 3-O-(5'-adenylyl)-L-seryl-[protein] + diphosphate. The catalysed reaction is L-threonyl-[protein] + ATP = 3-O-(5'-adenylyl)-L-threonyl-[protein] + diphosphate. It catalyses the reaction L-tyrosyl-[protein] + ATP = O-(5'-adenylyl)-L-tyrosyl-[protein] + diphosphate. The enzyme catalyses L-histidyl-[protein] + UTP = N(tele)-(5'-uridylyl)-L-histidyl-[protein] + diphosphate. It carries out the reaction L-seryl-[protein] + UTP = O-(5'-uridylyl)-L-seryl-[protein] + diphosphate. The catalysed reaction is L-tyrosyl-[protein] + UTP = O-(5'-uridylyl)-L-tyrosyl-[protein] + diphosphate. Nucleotidyltransferase involved in the post-translational modification of proteins. It can catalyze the addition of adenosine monophosphate (AMP) or uridine monophosphate (UMP) to a protein, resulting in modifications known as AMPylation and UMPylation. The protein is Protein nucleotidyltransferase YdiU of Yersinia pseudotuberculosis serotype O:1b (strain IP 31758).